The sequence spans 177 residues: Large ribosomal subunit protein uL6 (177 aa).

The protein belongs to the universal ribosomal protein uL6 family. Part of the 50S ribosomal subunit.

Functionally, this protein binds to the 23S rRNA, and is important in its secondary structure. It is located near the subunit interface in the base of the L7/L12 stalk, and near the tRNA binding site of the peptidyltransferase center. This is Large ribosomal subunit protein uL6 from Tolumonas auensis (strain DSM 9187 / NBRC 110442 / TA 4).